The primary structure comprises 437 residues: Putative ABC transporter ATP-binding protein CTC_00753 (437 aa).

ABC transporter domains follow at residues Met-1–Ile-143 and Leu-179–Lys-416. Gly-219–Ser-226 contacts ATP.

It belongs to the ABC transporter superfamily.

It is found in the cell membrane. Probably part of an ABC transporter complex. Responsible for energy coupling to the transport system. This Clostridium tetani (strain Massachusetts / E88) protein is Putative ABC transporter ATP-binding protein CTC_00753.